Reading from the N-terminus, the 476-residue chain is MEFESVIGLEVHAELLTNTKIYCGCTTEFGGKPNTHVCPVCLGLPGSLPQLNKRVLELGIKAGLALNCKITKVGRMDRKNYFYPDCPKNYQITQDELPICRDGYIDIELESGEVKRIGIERIHIEEDAGKLLHTKRGTLVDFNRAGVPLIEVVSKPDIRTPEEATLYLTKLRSILSSAQISDCKMEEGSLRCDGNISIRERGTEPFGIRSEIKNMNSFKALEKALNYEFDRQVEAVTNGEALSVETRRWDETNNKTIVMRSKEQANDYRYFPEGDLVTLNVSDEWIEEIRKTIPELPYQKADRFVKEYGLPKYDAHVLTLTDAMADYFDECAKLSGDPKAASNWIMGDISRLMKEESTWVEDLKFSPKELAELIEVIKDGTISSAIGKKVLEDMFAEGKSPKTIIDEKGLKQNNDEDAIRQLVNKVLDENPQVIEQYKSGRTRILGFAVGQVMKETKGQANPGIVNKLVTEEVEKR.

This sequence belongs to the GatB/GatE family. GatB subfamily. Heterotrimer of A, B and C subunits.

It carries out the reaction L-glutamyl-tRNA(Gln) + L-glutamine + ATP + H2O = L-glutaminyl-tRNA(Gln) + L-glutamate + ADP + phosphate + H(+). It catalyses the reaction L-aspartyl-tRNA(Asn) + L-glutamine + ATP + H2O = L-asparaginyl-tRNA(Asn) + L-glutamate + ADP + phosphate + 2 H(+). Allows the formation of correctly charged Asn-tRNA(Asn) or Gln-tRNA(Gln) through the transamidation of misacylated Asp-tRNA(Asn) or Glu-tRNA(Gln) in organisms which lack either or both of asparaginyl-tRNA or glutaminyl-tRNA synthetases. The reaction takes place in the presence of glutamine and ATP through an activated phospho-Asp-tRNA(Asn) or phospho-Glu-tRNA(Gln). The sequence is that of Aspartyl/glutamyl-tRNA(Asn/Gln) amidotransferase subunit B from Clostridium botulinum (strain Eklund 17B / Type B).